The following is a 522-amino-acid chain: Maturase K (522 aa).

This sequence belongs to the intron maturase 2 family. MatK subfamily.

It is found in the plastid. It localises to the chloroplast. Functionally, usually encoded in the trnK tRNA gene intron. Probably assists in splicing its own and other chloroplast group II introns. This chain is Maturase K, found in Iris tenax (Oregon iris).